Here is a 193-residue protein sequence, read N- to C-terminus: Small ribosomal subunit protein eS1 (193 aa).

This sequence belongs to the eukaryotic ribosomal protein eS1 family.

This Methanobrevibacter smithii (strain ATCC 35061 / DSM 861 / OCM 144 / PS) protein is Small ribosomal subunit protein eS1.